We begin with the raw amino-acid sequence, 96 residues long: Large ribosomal subunit protein uL23 (96 aa).

The protein belongs to the universal ribosomal protein uL23 family. Part of the 50S ribosomal subunit. Contacts protein L29, and trigger factor when it is bound to the ribosome.

Its function is as follows. One of the early assembly proteins it binds 23S rRNA. One of the proteins that surrounds the polypeptide exit tunnel on the outside of the ribosome. Forms the main docking site for trigger factor binding to the ribosome. This is Large ribosomal subunit protein uL23 from Desulfovibrio desulfuricans (strain ATCC 27774 / DSM 6949 / MB).